We begin with the raw amino-acid sequence, 102 residues long: Small ribosomal subunit protein bS18c (102 aa).

The protein belongs to the bacterial ribosomal protein bS18 family. In terms of assembly, part of the 30S ribosomal subunit.

It localises to the plastid. It is found in the chloroplast. This chain is Small ribosomal subunit protein bS18c, found in Phaseolus vulgaris (Kidney bean).